Reading from the N-terminus, the 503-residue chain is Maturase K (503 aa).

The protein belongs to the intron maturase 2 family. MatK subfamily.

It localises to the plastid. The protein localises to the chloroplast. Functionally, usually encoded in the trnK tRNA gene intron. Probably assists in splicing its own and other chloroplast group II introns. This Liquidambar styraciflua (Sweetgum tree) protein is Maturase K.